Here is a 399-residue protein sequence, read N- to C-terminus: uncharacterized protein (399 aa).

The segment covering 197–206 (ENSSASSVTS) has biased composition (polar residues). A disordered region spans residues 197-224 (ENSSASSVTSEECEQDVMDEQSAEDNEE). Residues 207 to 224 (EECEQDVMDEQSAEDNEE) show a composition bias toward acidic residues.

This is an uncharacterized protein from Diadromus pulchellus (Parasitic wasp).